A 501-amino-acid polypeptide reads, in one-letter code: Glycerol kinase (501 aa).

Thr17 provides a ligand contact to ADP. ATP is bound by residues Thr17, Thr18, and Ser19. Sn-glycerol 3-phosphate is bound at residue Thr17. ADP is bound at residue Arg21. Sn-glycerol 3-phosphate contacts are provided by Arg87, Glu88, Tyr139, and Asp243. Residues Arg87, Glu88, Tyr139, Asp243, and Gln244 each coordinate glycerol. 2 residues coordinate ADP: Thr265 and Gly308. ATP-binding residues include Thr265, Gly308, Gln312, and Gly409. ADP is bound by residues Gly409 and Asn413.

The protein belongs to the FGGY kinase family.

It carries out the reaction glycerol + ATP = sn-glycerol 3-phosphate + ADP + H(+). It functions in the pathway polyol metabolism; glycerol degradation via glycerol kinase pathway; sn-glycerol 3-phosphate from glycerol: step 1/1. Inhibited by fructose 1,6-bisphosphate (FBP). Its function is as follows. Key enzyme in the regulation of glycerol uptake and metabolism. Catalyzes the phosphorylation of glycerol to yield sn-glycerol 3-phosphate. The protein is Glycerol kinase of Pseudomonas fluorescens (strain ATCC BAA-477 / NRRL B-23932 / Pf-5).